We begin with the raw amino-acid sequence, 264 residues long: MAISIKTPEDIEKMRVAGRLAAEVLEMIEPYVKPGVSTGELDRICNDYIVNEQHAVSACLGYHGYPKSVCISINEVVCHGIPDDAKLLKDGDIVNIDVTVIKDGFHGDTSKMFIVGKPTIMGERLCRITQESLYLALRMVKPGINLREIGAAIQKFVEAEGFSVVREYCGHGIGRGFHEEPQVLHYDSRETNVVLKPGMTFTIEPMVNAGKKEIRTMKDGWTVKTKDRSLSAQYEHTIVVTDNGCEILTLRKDDTIPAIISHDE.

Residue H79 participates in substrate binding. The a divalent metal cation site is built by D97, D108, and H171. Residue H178 participates in substrate binding. E204 and E235 together coordinate a divalent metal cation.

Belongs to the peptidase M24A family. Methionine aminopeptidase type 1 subfamily. In terms of assembly, monomer. Co(2+) serves as cofactor. Zn(2+) is required as a cofactor. It depends on Mn(2+) as a cofactor. The cofactor is Fe(2+).

The enzyme catalyses Release of N-terminal amino acids, preferentially methionine, from peptides and arylamides.. In terms of biological role, removes the N-terminal methionine from nascent proteins. The N-terminal methionine is often cleaved when the second residue in the primary sequence is small and uncharged (Met-Ala-, Cys, Gly, Pro, Ser, Thr, or Val). Requires deformylation of the N(alpha)-formylated initiator methionine before it can be hydrolyzed. The chain is Methionine aminopeptidase from Escherichia coli O157:H7.